The primary structure comprises 270 residues: Mediator of RNA polymerase II transcription subunit 4 (270 aa).

The disordered stretch occupies residues 1-22 (MAASSSGEKEKERMGGVSGMTG). Ala-2 bears the N-acetylalanine mark. Residues 26-131 (TRERLLSALE…ATAVYQAKEK (106 aa)) are a coiled coil. Ser-32 bears the Phosphoserine mark. Positions 227–270 (MSVNMLPPNHSTDFLLEPPGHNKENEDDVEVMSTDSSSSSSDSD) are disordered. The segment covering 259–270 (STDSSSSSSDSD) has biased composition (low complexity).

The protein belongs to the Mediator complex subunit 4 family. Component of the Mediator complex, which is composed of MED1, MED4, MED6, MED7, MED8, MED9, MED10, MED11, MED12, MED13, MED13L, MED14, MED15, MED16, MED17, MED18, MED19, MED20, MED21, MED22, MED23, MED24, MED25, MED26, MED27, MED29, MED30, MED31, CCNC, CDK8 and CDC2L6/CDK11. The MED12, MED13, CCNC and CDK8 subunits form a distinct module termed the CDK8 module. Mediator containing the CDK8 module is less active than Mediator lacking this module in supporting transcriptional activation. Individual preparations of the Mediator complex lacking one or more distinct subunits have been variously termed ARC, CRSP, DRIP, PC2, SMCC and TRAP.

The protein resides in the nucleus. Its function is as follows. Component of the Mediator complex, a coactivator involved in the regulated transcription of nearly all RNA polymerase II-dependent genes. Mediator functions as a bridge to convey information from gene-specific regulatory proteins to the basal RNA polymerase II transcription machinery. Mediator is recruited to promoters by direct interactions with regulatory proteins and serves as a scaffold for the assembly of a functional preinitiation complex with RNA polymerase II and the general transcription factors. In Rattus norvegicus (Rat), this protein is Mediator of RNA polymerase II transcription subunit 4 (Med4).